A 450-amino-acid chain; its full sequence is Methionine aminopeptidase 2 (450 aa).

A disordered region spans residues 1-99 (MAVQAPEVDK…LFPNSQYPEG (99 aa)). Over residues 33–49 (GDEDAENEESDEDDDQG) the composition is skewed to acidic residues. Positions 60–75 (KKKRKRKPKKKKKKGV) are enriched in basic residues. Substrate is bound at residue H200. 3 residues coordinate a divalent metal cation: D220, D231, and H300. Residue H308 coordinates substrate. Residues E336 and E431 each coordinate a divalent metal cation.

This sequence belongs to the peptidase M24A family. Methionine aminopeptidase eukaryotic type 2 subfamily. Requires Co(2+) as cofactor. Zn(2+) is required as a cofactor. The cofactor is Mn(2+). It depends on Fe(2+) as a cofactor.

The protein resides in the cytoplasm. The enzyme catalyses Release of N-terminal amino acids, preferentially methionine, from peptides and arylamides.. Functionally, cotranslationally removes the N-terminal methionine from nascent proteins. The N-terminal methionine is often cleaved when the second residue in the primary sequence is small and uncharged (Met-Ala-, Cys, Gly, Pro, Ser, Thr, or Val). This Uncinocarpus reesii (strain UAMH 1704) protein is Methionine aminopeptidase 2.